Reading from the N-terminus, the 424-residue chain is Histidine--tRNA ligase (424 aa).

Belongs to the class-II aminoacyl-tRNA synthetase family. As to quaternary structure, homodimer.

Its subcellular location is the cytoplasm. It catalyses the reaction tRNA(His) + L-histidine + ATP = L-histidyl-tRNA(His) + AMP + diphosphate + H(+). The polypeptide is Histidine--tRNA ligase (Thioalkalivibrio sulfidiphilus (strain HL-EbGR7)).